The following is a 244-amino-acid chain: Protein TIFY 10b (244 aa).

In terms of domain architecture, Tify spans 97-132 (QEPEKRQLTIFYGGKVLVFNDFPADKAKGLMQLASK). The interval 174–244 (QKPARANASD…AVVKPIERGQ (71 aa)) is disordered. The Jas motif lies at 185 to 210 (PIARKASLHRFLEKRKDRLNAKTPYQ). The Nuclear localization signal motif lies at 187-194 (ARKASLHR). The span at 194 to 204 (RFLEKRKDRLN) shows a compositional bias: basic and acidic residues.

The protein belongs to the TIFY/JAZ family. Interacts with BHLH148. Interacts with COI1A and COI1B in a coronatine-dependent manner. Coronatine is an analog of jasmonoyl isoleucine (JA-Ile). Post-translationally, ubiquitinated. Targeted for degradation by the SCF(COI1) E3 ubiquitin ligase-proteasome pathway during jasmonate signaling.

It localises to the nucleus. In terms of biological role, repressor of jasmonate responses. This chain is Protein TIFY 10b, found in Oryza sativa subsp. japonica (Rice).